We begin with the raw amino-acid sequence, 255 residues long: Chlorocatechol 1,2-dioxygenase (255 aa).

Fe cation-binding residues include Y130, Y164, H188, and H190.

It belongs to the intradiol ring-cleavage dioxygenase family. Requires Fe(3+) as cofactor.

The enzyme catalyses 3,5-dichlorocatechol + O2 = (2E,4E)-2,4-dichloromuconate + 2 H(+). It participates in aromatic compound metabolism; 3-chlorocatechol degradation. Functionally, preferentially converts 3,5-dichlorocatechol as opposed to other chlorinated catechols. Retains diminished activity toward non-chlorinated substrates. In Burkholderia cepacia (Pseudomonas cepacia), this protein is Chlorocatechol 1,2-dioxygenase (tfdC).